A 131-amino-acid polypeptide reads, in one-letter code: Sec-independent protein translocase protein TatB (131 aa).

The chain crosses the membrane as a helical span at residues 2–22 (FANIGWWEMLVLVMVGLVVLG). A disordered region spans residues 90 to 131 (DSLFTGDFDRPTPKKPDAAGSAGPDATEQIGAGPIPFDSDAT). Basic and acidic residues predominate over residues 96–106 (DFDRPTPKKPD).

Belongs to the TatB family. The Tat system comprises two distinct complexes: a TatABC complex, containing multiple copies of TatA, TatB and TatC subunits, and a separate TatA complex, containing only TatA subunits. Substrates initially bind to the TatABC complex, which probably triggers association of the separate TatA complex to form the active translocon.

It is found in the cell membrane. Part of the twin-arginine translocation (Tat) system that transports large folded proteins containing a characteristic twin-arginine motif in their signal peptide across membranes. Together with TatC, TatB is part of a receptor directly interacting with Tat signal peptides. TatB may form an oligomeric binding site that transiently accommodates folded Tat precursor proteins before their translocation. The sequence is that of Sec-independent protein translocase protein TatB from Mycobacterium tuberculosis (strain ATCC 25177 / H37Ra).